Consider the following 158-residue polypeptide: Cyclic pyranopterin monophosphate synthase (158 aa).

Substrate is bound by residues 76-78 (LCH) and 114-115 (ME). Residue Asp129 is part of the active site.

Belongs to the MoaC family. As to quaternary structure, homohexamer; trimer of dimers.

It catalyses the reaction (8S)-3',8-cyclo-7,8-dihydroguanosine 5'-triphosphate = cyclic pyranopterin phosphate + diphosphate. It participates in cofactor biosynthesis; molybdopterin biosynthesis. In terms of biological role, catalyzes the conversion of (8S)-3',8-cyclo-7,8-dihydroguanosine 5'-triphosphate to cyclic pyranopterin monophosphate (cPMP). The protein is Cyclic pyranopterin monophosphate synthase of Shewanella baltica (strain OS223).